A 312-amino-acid chain; its full sequence is Light-independent protochlorophyllide reductase iron-sulfur ATP-binding protein (312 aa).

Residues 55–60 (GIGKST) and K84 contribute to the ATP site. S59 provides a ligand contact to Mg(2+). 2 residues coordinate [4Fe-4S] cluster: C140 and C174. Residues 225-226 (NR) and 249-251 (PDL) contribute to the ATP site.

This sequence belongs to the NifH/BchL/ChlL family. In terms of assembly, homodimer. Protochlorophyllide reductase is composed of three subunits; BchL, BchN and BchB. Requires [4Fe-4S] cluster as cofactor.

The enzyme catalyses chlorophyllide a + oxidized 2[4Fe-4S]-[ferredoxin] + 2 ADP + 2 phosphate = protochlorophyllide a + reduced 2[4Fe-4S]-[ferredoxin] + 2 ATP + 2 H2O. Its pathway is porphyrin-containing compound metabolism; bacteriochlorophyll biosynthesis (light-independent). Its function is as follows. Component of the dark-operative protochlorophyllide reductase (DPOR) that uses Mg-ATP and reduced ferredoxin to reduce ring D of protochlorophyllide (Pchlide) to form chlorophyllide a (Chlide). This reaction is light-independent. The L component serves as a unique electron donor to the NB-component of the complex, and binds Mg-ATP. The polypeptide is Light-independent protochlorophyllide reductase iron-sulfur ATP-binding protein (Rhodopseudomonas palustris (strain HaA2)).